The following is a 346-amino-acid chain: 36.4 kDa proline-rich protein (346 aa).

The disordered stretch occupies residues 11–144 (PYPPSTPKHP…PFTPKPPSPI (134 aa)). 3 stretches are compositionally biased toward pro residues: residues 25–42 (KVKP…PSTP), 51–81 (VKPP…PSTP), and 89–144 (QKPC…PSPI).

The protein is 36.4 kDa proline-rich protein (TPRP-F1) of Solanum lycopersicum (Tomato).